We begin with the raw amino-acid sequence, 793 residues long: MDERTLRTLEFAKIKEMLAERTATSLGREVVESLAPATDFLEVQHRQAETSEARRLYEGGHAIPLGGLHDLRAHVQRAVRGGVLDPGDLLDVADTAASSRRLKRFLEEQEGLPILTALSRMLGTFHHLEAEIRQAVDEHGEVRDDASPALAEIRRSMRILQNRMKERLDAFVRGSAAKYLQDPIVTIREGRFVVPVKIEYRAQVPGIVHDQSASGSTLFIEPMAIVEMNNDLRELALKEHEEVERILARLSSLVAGEADALLDTLQAVAQIDFASAKGKLSLDLDCTEPELVREPILEIHKGRHPLLKGRVVPIDVHIGITFDTLVITGPNTGGKTVALKTMGLFVLMAQAGLHLPAGHGTRVGVFQQVFVDIGDEQSIEQSLSTFSGHMTNIIRILDALEGPALVLLDELGAGTDPTEGAALAMSILEHLHKRGAKTVATTHYSELKTYAYTRSRVENASVEFDVETLRPTFRLLIGVPGSSNAFEISRRLGLSPHIVDRARQFLTQEQERVEDLIQGIHATRAELEKERAEAHRLRAEAQRMREEYERRYGDAQRKAAETVEKARAQAQQILATARREAEAVIAELKQALREQREAERMQAIQSARSRLARARQAVEPTEEEQRARRRGEVPRGLKPGDKVRVVSLDTTGYVLSEPDADGNVLVQAGILKMTVSLTDLERASEEQPAAGAGGPARMRTHGKGLAVSKAREMSPEVDLRGLMVEEALERVDKFLDDAVLAGLPQVRIIHGKGTGALRKAVTEALRHDRRVESYRLGGVGEGGDGVTVAKLRE.

329 to 336 (GPNTGGKT) contributes to the ATP binding site. A disordered region spans residues 611–639 (LARARQAVEPTEEEQRARRRGEVPRGLKP). Residues 623–639 (EEQRARRRGEVPRGLKP) show a composition bias toward basic and acidic residues. The Smr domain occupies 717-792 (VDLRGLMVEE…GDGVTVAKLR (76 aa)).

This sequence belongs to the DNA mismatch repair MutS family. MutS2 subfamily. Homodimer. Binds to stalled ribosomes, contacting rRNA.

In terms of biological role, endonuclease that is involved in the suppression of homologous recombination and thus may have a key role in the control of bacterial genetic diversity. Functionally, acts as a ribosome collision sensor, splitting the ribosome into its 2 subunits. Detects stalled/collided 70S ribosomes which it binds and splits by an ATP-hydrolysis driven conformational change. Acts upstream of the ribosome quality control system (RQC), a ribosome-associated complex that mediates the extraction of incompletely synthesized nascent chains from stalled ribosomes and their subsequent degradation. Probably generates substrates for RQC. The sequence is that of Endonuclease MutS2 from Symbiobacterium thermophilum (strain DSM 24528 / JCM 14929 / IAM 14863 / T).